The following is a 163-amino-acid chain: Lipoprotein signal peptidase (163 aa).

3 helical membrane passes run 11–31, 63–83, and 88–108; these read ILIA…IATT, KMTF…YFFI, and YNLF…GNFI. Active-site residues include D118 and D136. A helical transmembrane segment spans residues 131-151; the sequence is IFNIADSSLTIGVILIIIALL.

The protein belongs to the peptidase A8 family.

The protein resides in the cell membrane. The enzyme catalyses Release of signal peptides from bacterial membrane prolipoproteins. Hydrolyzes -Xaa-Yaa-Zaa-|-(S,diacylglyceryl)Cys-, in which Xaa is hydrophobic (preferably Leu), and Yaa (Ala or Ser) and Zaa (Gly or Ala) have small, neutral side chains.. The protein operates within protein modification; lipoprotein biosynthesis (signal peptide cleavage). Functionally, this protein specifically catalyzes the removal of signal peptides from prolipoproteins. This Staphylococcus aureus (strain Mu3 / ATCC 700698) protein is Lipoprotein signal peptidase.